Here is a 127-residue protein sequence, read N- to C-terminus: Aspartate 1-decarboxylase (127 aa).

The active-site Schiff-base intermediate with substrate; via pyruvic acid is Ser25. Ser25 is modified (pyruvic acid (Ser)). Substrate is bound at residue Thr57. Catalysis depends on Tyr58, which acts as the Proton donor. Residue 73–75 coordinates substrate; it reads GAA.

It belongs to the PanD family. As to quaternary structure, heterooctamer of four alpha and four beta subunits. Requires pyruvate as cofactor. Is synthesized initially as an inactive proenzyme, which is activated by self-cleavage at a specific serine bond to produce a beta-subunit with a hydroxyl group at its C-terminus and an alpha-subunit with a pyruvoyl group at its N-terminus.

The protein localises to the cytoplasm. The catalysed reaction is L-aspartate + H(+) = beta-alanine + CO2. It functions in the pathway cofactor biosynthesis; (R)-pantothenate biosynthesis; beta-alanine from L-aspartate: step 1/1. Functionally, catalyzes the pyruvoyl-dependent decarboxylation of aspartate to produce beta-alanine. This is Aspartate 1-decarboxylase from Aliarcobacter butzleri (strain RM4018) (Arcobacter butzleri).